The chain runs to 258 residues: uncharacterized protein (258 aa).

An N-terminal signal peptide occupies residues 1–20 (MKCFQKLYIFILILIVLMAG). Cysteine 21 carries the N-palmitoyl cysteine lipid modification. The S-diacylglycerol cysteine moiety is linked to residue cysteine 21.

This sequence belongs to the staphylococcal tandem lipoprotein family.

The protein localises to the cell membrane. This is an uncharacterized protein from Staphylococcus aureus (strain COL).